The primary structure comprises 292 residues: 4-hydroxy-tetrahydrodipicolinate synthase 2 (292 aa).

Thr-46 lines the pyruvate pocket. Tyr-134 serves as the catalytic Proton donor/acceptor. Residue Lys-162 is the Schiff-base intermediate with substrate of the active site. Val-204 serves as a coordination point for pyruvate.

This sequence belongs to the DapA family. As to quaternary structure, homotetramer; dimer of dimers.

The protein resides in the cytoplasm. The catalysed reaction is L-aspartate 4-semialdehyde + pyruvate = (2S,4S)-4-hydroxy-2,3,4,5-tetrahydrodipicolinate + H2O + H(+). Its pathway is amino-acid biosynthesis; L-lysine biosynthesis via DAP pathway; (S)-tetrahydrodipicolinate from L-aspartate: step 3/4. Catalyzes the condensation of (S)-aspartate-beta-semialdehyde [(S)-ASA] and pyruvate to 4-hydroxy-tetrahydrodipicolinate (HTPA). This chain is 4-hydroxy-tetrahydrodipicolinate synthase 2, found in Halalkalibacterium halodurans (strain ATCC BAA-125 / DSM 18197 / FERM 7344 / JCM 9153 / C-125) (Bacillus halodurans).